The following is a 185-amino-acid chain: Peptidyl-tRNA hydrolase (185 aa).

TRNA is bound at residue Tyr-14. His-19 serves as the catalytic Proton acceptor. Residues Tyr-64, Asn-66, and Asn-112 each contribute to the tRNA site.

The protein belongs to the PTH family. In terms of assembly, monomer.

The protein resides in the cytoplasm. It catalyses the reaction an N-acyl-L-alpha-aminoacyl-tRNA + H2O = an N-acyl-L-amino acid + a tRNA + H(+). Functionally, hydrolyzes ribosome-free peptidyl-tRNAs (with 1 or more amino acids incorporated), which drop off the ribosome during protein synthesis, or as a result of ribosome stalling. Catalyzes the release of premature peptidyl moieties from peptidyl-tRNA molecules trapped in stalled 50S ribosomal subunits, and thus maintains levels of free tRNAs and 50S ribosomes. This chain is Peptidyl-tRNA hydrolase, found in Exiguobacterium sibiricum (strain DSM 17290 / CCUG 55495 / CIP 109462 / JCM 13490 / 255-15).